The sequence spans 339 residues: 2-keto-3-deoxygluconate permease (339 aa).

The next 10 membrane-spanning stretches (helical) occupy residues 10-30 (IPGG…TFAP), 42-62 (GLIS…GASI), 77-97 (LVVT…RILP), 100-120 (GVEV…AMDM), 141-161 (AFVL…LGTA), 163-183 (IASF…VGFA), 199-219 (VQTL…LSVI), 224-244 (LLGV…LIVA), 254-274 (TAGI…VLIA), and 289-309 (TLVA…TAMW). The disordered stretch occupies residues 315–339 (GGDGTVPKEDAVEEKAEQQRRRIIK). Residues 320–339 (VPKEDAVEEKAEQQRRRIIK) show a composition bias toward basic and acidic residues.

The protein belongs to the KdgT transporter family.

Its subcellular location is the cell inner membrane. It catalyses the reaction 2-dehydro-3-deoxy-D-gluconate(in) + H(+)(in) = 2-dehydro-3-deoxy-D-gluconate(out) + H(+)(out). Uptake is inhibited by the protonophore uncouplers carbonyl cyanide m-chlorophenylhydrazone (CCCP) and 2,4-dinitrophenol, and by NaN(3). Its function is as follows. Catalyzes the proton-dependent uptake of 2-keto-3-deoxygluconate (KDG) into the cell. Can also mediate the uptake of glucuronate with a low affinity, and may mediate the uptake of 5-keto-4-deoxyuronate (DKI) and 2,5-diketo-3-deoxygluconate (DKII), which are intermediates in pectin degradation. This is 2-keto-3-deoxygluconate permease from Dickeya chrysanthemi (Pectobacterium chrysanthemi).